The primary structure comprises 1172 residues: Ras guanine nucleotide exchange factor W (1172 aa).

Low complexity-rich tracts occupy residues 34 to 70 (PIYTNDNSNNNNNDETSSNISGSNSIQNLSLNNLNNL) and 78 to 87 (NSNSVNNTIS). Disordered stretches follow at residues 34-100 (PIYT…RSNT), 138-162 (KFLDQHTPPPSPKPEHLSGHLRIQQ), and 186-246 (FKRS…EIKD). A compositionally biased stretch (low complexity) spans 194 to 241 (QPPQSQSQQQQQLQLQQQQQQSMPNLSLGNNINSNNNNNNGSENNDIS). 6 helical membrane-spanning segments follow: residues 286 to 306 (IWLTIMIISIIFVLFIDDIIG), 320 to 340 (IMAVKCSIIGFFSIDIILNLF), 347 to 367 (FPGTIVFWLDLISLISIVTDI), 378 to 400 (VLSITVNTRIIRICGSFIRISLI), 432 to 452 (LTTNKIVLLALAVLFATQLLV), and 545 to 565 (ILHLCLTVFVILVLITINLLI). The stretch at 666-702 (LLGMLNEIDDSLQAAKEKVEEESIQNSILKKDIEDLY) forms a coiled coil. The region spanning 765-903 (DLNVIQYATI…YIDSIHKRKM (139 aa)) is the N-terminal Ras-GEF domain. Residues 938-1170 (DISDIAIQIT…WKMSLSCEQR (233 aa)) form the Ras-GEF domain.

Its subcellular location is the membrane. In terms of biological role, promotes the exchange of Ras-bound GDP by GTP. This is Ras guanine nucleotide exchange factor W (gefW) from Dictyostelium discoideum (Social amoeba).